The following is a 604-amino-acid chain: Ran-binding protein 10 (604 aa).

The B30.2/SPRY domain occupies 23-210 (LNERLKRLYP…VDANFGQQPF (188 aa)). The 33-residue stretch at 241–273 (WQAVLQNMVSSYLVHHGYCATAMAFARATETMI) folds into the LisH domain. One can recognise a CTLH domain in the interval 279–336 (SIKNRQRIQKLVLAGRVGEAIDATQQLYPGLLEHNPNLLFMLKCRQFVEMVNGTDSEV). Residues 342–454 (RSPKSQDSYP…HYSNGVTESS (113 aa)) form a disordered region. 2 stretches are compositionally biased toward polar residues: residues 343 to 356 (SPKS…SPNM) and 371 to 396 (GADS…YTGI). Residues 397 to 420 (SSASSSPSSSPSSVNYSESNSTDS) are compositionally biased toward low complexity. Residues 421-434 (TKSQPHSATSNQET) are compositionally biased toward polar residues.

The protein belongs to the RANBP9/10 family.

Functionally, may act as an adapter protein to couple membrane receptors to intracellular signaling pathways. This Danio rerio (Zebrafish) protein is Ran-binding protein 10 (ranbp10).